The following is a 29-amino-acid chain: uncharacterized protein (29 aa).

Residues 7-27 traverse the membrane as a helical segment; it reads FSLVTTIIVLGLIVAVGLTAA.

Its subcellular location is the cell inner membrane. This is an uncharacterized protein from Escherichia coli O6:K15:H31 (strain 536 / UPEC).